Reading from the N-terminus, the 131-residue chain is Ribonuclease P protein component (131 aa).

It belongs to the RnpA family. In terms of assembly, consists of a catalytic RNA component (M1 or rnpB) and a protein subunit.

It catalyses the reaction Endonucleolytic cleavage of RNA, removing 5'-extranucleotides from tRNA precursor.. Functionally, RNaseP catalyzes the removal of the 5'-leader sequence from pre-tRNA to produce the mature 5'-terminus. It can also cleave other RNA substrates such as 4.5S RNA. The protein component plays an auxiliary but essential role in vivo by binding to the 5'-leader sequence and broadening the substrate specificity of the ribozyme. This is Ribonuclease P protein component from Acinetobacter baylyi (strain ATCC 33305 / BD413 / ADP1).